A 424-amino-acid polypeptide reads, in one-letter code: FeMo cofactor biosynthesis protein NifB (424 aa).

Residues 12–261 (NDSSRHTYGR…PQMKHCARCR (250 aa)) form the Radical SAM core domain. [4Fe-4S] cluster is bound by residues cysteine 30, cysteine 34, and cysteine 37. 3 residues coordinate S-adenosyl-L-methionine: glycine 84, threonine 136, and valine 188. 2 residues coordinate [4Fe-4S] cluster: cysteine 257 and cysteine 260.

It belongs to the radical SAM superfamily. NifB family. Monomer. [4Fe-4S] cluster serves as cofactor.

It participates in cofactor biosynthesis; Fe-Mo cofactor biosynthesis. In terms of biological role, involved in the biosynthesis of the iron-molybdenum cofactor (FeMo-co or M-cluster) found in the dinitrogenase enzyme of the nitrogenase complex in nitrogen-fixing microorganisms. NifB catalyzes the crucial step of radical SAM-dependent carbide insertion that occurs concomitant with the insertion of a 9th sulfur and the rearrangement/coupling of two [4Fe-4S] clusters into a [8Fe-9S-C] cluster, the precursor to the M-cluster. This is FeMo cofactor biosynthesis protein NifB from Chlorobaculum tepidum (strain ATCC 49652 / DSM 12025 / NBRC 103806 / TLS) (Chlorobium tepidum).